A 113-amino-acid chain; its full sequence is Integration host factor subunit alpha (113 aa).

Residues 59 to 80 form a disordered region; that stretch reads GNFQVRDKPPRPGRNPKTGETI.

It belongs to the bacterial histone-like protein family. Heterodimer of an alpha and a beta chain.

In terms of biological role, this protein is one of the two subunits of integration host factor, a specific DNA-binding protein that functions in genetic recombination as well as in transcriptional and translational control. This Bordetella bronchiseptica (strain ATCC BAA-588 / NCTC 13252 / RB50) (Alcaligenes bronchisepticus) protein is Integration host factor subunit alpha.